Consider the following 776-residue polypeptide: Transcription activator of gluconeogenesis HCAG_03671 (776 aa).

The disordered stretch occupies residues 1-70; that stretch reads MTASTQNGSP…NAKDPLRPRR (70 aa). Polar residues-rich tracts occupy residues 21-41 and 50-60; these read NQES…QSPA and ENGQKHTSTAA. Positions 77 to 105 form a DNA-binding region, zn(2)-C6 fungal-type; the sequence is CFACQRAHLTCGDERPCQRCIKRGLQDAC. Disordered regions lie at residues 140–159, 179–248, 286–351, 556–593, and 651–726; these read RTNA…KDSR, TQAK…PFGA, GAGD…NIYN, NLNV…GGGG, and REAQ…SPKQ. The segment covering 142–155 has biased composition (low complexity); it reads NASQQQNGPNSNSN. Residues 195–217 are compositionally biased toward polar residues; sequence MQDTSINPSAFQAPSPTSTPNFD. Residues 218 to 229 show a composition bias toward low complexity; the sequence is LSSNPPNRNLSS. 4 stretches are compositionally biased toward polar residues: residues 230-244, 292-322, 334-351, and 557-576; these read AMTQ…QTQD, PSDS…NTQP, WNPS…NIYN, and LNVN…TPRN. Gly residues predominate over residues 657-669; the sequence is GPDGKGGGGGGGD. Residues 670-714 are compositionally biased toward low complexity; that stretch reads VATTAATTSTSTSNGANSSGHANANRNNTNPNNSSPPSSSSAAAA.

This sequence belongs to the ERT1/acuK family.

It localises to the nucleus. Its function is as follows. Transcription factor which regulates nonfermentable carbon utilization. Activator of gluconeogenetic genes. The sequence is that of Transcription activator of gluconeogenesis HCAG_03671 from Ajellomyces capsulatus (strain NAm1 / WU24) (Darling's disease fungus).